A 123-amino-acid polypeptide reads, in one-letter code: Ig heavy chain V region H8 (123 aa).

In terms of domain architecture, Ig-like spans 1–114; sequence EVKLVESGGG…BSYWYFDVWG (114 aa).

This chain is Ig heavy chain V region H8, found in Mus musculus (Mouse).